The chain runs to 236 residues: Chorionic somatomammotropin hormone 1 (236 aa).

The N-terminal stretch at 1-36 (MAPASSHRGHQWICDLVRGSCLLLLLVVSNLLLCQG) is a signal peptide. An N-linked (GlcNAc...) asparagine glycan is attached at Asn89. 2 cysteine pairs are disulfide-bonded: Cys98/Cys214 and Cys231/Cys236.

This sequence belongs to the somatotropin/prolactin family.

The protein localises to the secreted. The protein is Chorionic somatomammotropin hormone 1 (CSH1) of Bos taurus (Bovine).